Here is a 478-residue protein sequence, read N- to C-terminus: NAD(+) hydrolase ThsA (478 aa).

One can recognise a Deacetylase sirtuin-type domain in the interval 1-287; that stretch reads MDKKVLIKRF…SIRKKYLRKT (287 aa). 3 residues coordinate NAD(+): Ala-19, Asp-110, and His-148. Residue His-148 is the Proton acceptor of the active site. Residues 288 to 478 are SLOG (STALD) domain; that stretch reads IFISGSAVDY…VSLINSIQED (191 aa). Positions 292, 293, 330, 373, 390, 401, and 405 each coordinate 3'cADPR.

Belongs to the soluble Thoeris ThsA family. In terms of assembly, homotetramer in solution.

The catalysed reaction is NAD(+) + H2O = ADP-D-ribose + nicotinamide + H(+). Its activity is regulated as follows. Activated by 3'cADPR. NAD(+) hydrolyzing component (NADase) of the Thoeris antiviral defense system, composed of ThsA and ThsB (maybe AS248_15445). Activated by 3' cyclic ADP-D-ribose (3'cADPR) but not its isomers 2'cADPR, cADPR and very weakly by ADPR; binds 3'cADPR better than 2'cADPR. Upon activation binds and hydrolyzes NAD(+), leading to cell death and inhibition of phage replication. In Enterococcus faecium (Streptococcus faecium), this protein is NAD(+) hydrolase ThsA.